The sequence spans 21 residues: NRTFKTNTKCHVKNQCNFLCQ.

In terms of tissue distribution, expressed by the venom gland.

The protein localises to the secreted. In Opisthacanthus cayaporum (South American scorpion), this protein is Venom peptide Ocy4.